The chain runs to 140 residues: Large ribosomal subunit protein bL17 (140 aa).

Positions 119–133 (DPSAKGAADRARLEE) are enriched in basic and acidic residues. The tract at residues 119-140 (DPSAKGAADRARLEEEGGMTEE) is disordered.

It belongs to the bacterial ribosomal protein bL17 family. As to quaternary structure, part of the 50S ribosomal subunit. Contacts protein L32.

This Maricaulis maris (strain MCS10) (Caulobacter maris) protein is Large ribosomal subunit protein bL17.